The chain runs to 89 residues: Small ribosomal subunit protein uS14 (89 aa).

The protein belongs to the universal ribosomal protein uS14 family. As to quaternary structure, part of the 30S ribosomal subunit. Contacts proteins S3 and S10.

Binds 16S rRNA, required for the assembly of 30S particles and may also be responsible for determining the conformation of the 16S rRNA at the A site. The polypeptide is Small ribosomal subunit protein uS14 (Chlorobaculum tepidum (strain ATCC 49652 / DSM 12025 / NBRC 103806 / TLS) (Chlorobium tepidum)).